Consider the following 262-residue polypeptide: Putative glutamine--fructose-6-phosphate aminotransferase [isomerizing] (262 aa).

The active-site Nucleophile; for GATase activity is the C2. The region spanning 2–262 (CGIFGYCNFL…RKSPPFVHNT (261 aa)) is the Glutamine amidotransferase type-2 domain.

It carries out the reaction D-fructose 6-phosphate + L-glutamine = D-glucosamine 6-phosphate + L-glutamate. It participates in nucleotide-sugar biosynthesis; UDP-N-acetyl-alpha-D-glucosamine biosynthesis; alpha-D-glucosamine 6-phosphate from D-fructose 6-phosphate: step 1/1. Functionally, involved in amino sugar synthesis (formation of chitin, supplies the amino sugars of asparagine-linked oligosaccharides of glycoproteins). This is Putative glutamine--fructose-6-phosphate aminotransferase [isomerizing] from Saccharomyces cerevisiae (strain ATCC 204508 / S288c) (Baker's yeast).